We begin with the raw amino-acid sequence, 89 residues long: Small ribosomal subunit protein uS19 (89 aa).

The protein belongs to the universal ribosomal protein uS19 family.

In terms of biological role, protein S19 forms a complex with S13 that binds strongly to the 16S ribosomal RNA. The protein is Small ribosomal subunit protein uS19 of Brachyspira hyodysenteriae (strain ATCC 49526 / WA1).